The primary structure comprises 528 residues: Benzoylformate decarboxylase (528 aa).

Residues Asn-117, Leu-118, and Arg-120 each contribute to the Mg(2+) site. Positions 377-460 (TSTTAQMWQR…VIMNNGTYGA (84 aa)) are thiamine pyrophosphate binding. Residues Asp-428, Asn-455, and Thr-457 each contribute to the Ca(2+) site.

The protein belongs to the TPP enzyme family. Homotetramer. The cofactor is Ca(2+). Thiamine diphosphate serves as cofactor. It depends on Mg(2+) as a cofactor.

The enzyme catalyses phenylglyoxylate + H(+) = benzaldehyde + CO2. It functions in the pathway aromatic compound metabolism; (R)-mandelate degradation; benzoate from (R)-mandelate: step 3/4. The polypeptide is Benzoylformate decarboxylase (mdlC) (Pseudomonas putida (Arthrobacter siderocapsulatus)).